Reading from the N-terminus, the 197-residue chain is Ribosome maturation factor RimP (197 aa).

It belongs to the RimP family.

Its subcellular location is the cytoplasm. Its function is as follows. Required for maturation of 30S ribosomal subunits. In Acidovorax sp. (strain JS42), this protein is Ribosome maturation factor RimP.